The sequence spans 105 residues: Heat shock protein HspQ (105 aa).

The protein belongs to the HspQ family.

It is found in the cytoplasm. Involved in the degradation of certain denaturated proteins, including DnaA, during heat shock stress. This Baumannia cicadellinicola subsp. Homalodisca coagulata protein is Heat shock protein HspQ.